The primary structure comprises 425 residues: Lysosome-associated membrane glycoprotein 2 (425 aa).

The N-terminal stretch at Met-1–Ala-27 is a signal peptide. A first lumenal domain region spans residues Val-28–Asp-192. Residues Val-28–Asn-389 are Lumenal-facing. Residues Asn-37, Asn-56, Asn-62, Asn-74, Asn-100, Asn-105, Asn-120, Asn-163, Asn-170, Asn-179, Asn-206, Asn-232, Asn-239, Asn-252, Asn-276, Asn-287, Asn-298, Asn-312, Asn-320, and Asn-331 are each glycosylated (N-linked (GlcNAc...) asparagine). Cys-40 and Cys-78 are joined by a disulfide. Cys-153 and Cys-189 are joined by a disulfide. The segment at Thr-193 to Gly-238 is hinge. The interval Asn-239 to Phe-390 is second lumenal domain. A disulfide bridge links Cys-242 with Cys-274. Cysteines 345 and 382 form a disulfide. Residues Phe-390–Gly-414 traverse the membrane as a helical segment. Residues Arg-415 to Val-425 lie on the Cytoplasmic side of the membrane. An important for binding and subsequent lysosomal degradation of target proteins region spans residues Arg-416–Arg-419.

This sequence belongs to the LAMP family. In terms of assembly, monomer. Forms large homooligomers. Extensively N-glycosylated. Contains a minor proportion of O-linked glycans.

The protein resides in the lysosome membrane. It is found in the endosome membrane. Its subcellular location is the cell membrane. It localises to the cytoplasmic vesicle. The protein localises to the autophagosome membrane. Lysosomal membrane glycoprotein which plays an important role in lysosome biogenesis, lysosomal pH regulation and autophagy. Plays an important role in chaperone-mediated autophagy, a process that mediates lysosomal degradation of proteins in response to various stresses and as part of the normal turnover of proteins with a long biological half-live. In the chaperone-mediated autophagy, acts downstream of chaperones, such as HSPA8/HSC70, which recognize and bind substrate proteins and mediate their recruitment to lysosomes, where target proteins bind LAMP2. Plays a role in lysosomal protein degradation in response to starvation. Required for the fusion of autophagosomes with lysosomes during autophagy. This is Lysosome-associated membrane glycoprotein 2 (LAMP2) from Gallus gallus (Chicken).